Reading from the N-terminus, the 347-residue chain is Gamma-glutamyl hydrolase B (347 aa).

A signal peptide spans 1–22 (MIKLFSLFIYLYLISNLKLINT). The region spanning 23 to 314 (INNTPVIGIL…THVEQIYIFN (292 aa)) is the Gamma-glutamyl hydrolase domain. The active-site Nucleophile is the cysteine 128. Asparagine 152, asparagine 158, and asparagine 201 each carry an N-linked (GlcNAc...) asparagine glycan. Histidine 240 functions as the Proton donor in the catalytic mechanism. Residues asparagine 273, asparagine 314, and asparagine 318 are each glycosylated (N-linked (GlcNAc...) asparagine).

It belongs to the peptidase C26 family.

It localises to the secreted. The protein resides in the extracellular space. It catalyses the reaction (6S)-5,6,7,8-tetrahydrofolyl-(gamma-L-Glu)(n) + (n-1) H2O = (6S)-5,6,7,8-tetrahydrofolate + (n-1) L-glutamate. This is Gamma-glutamyl hydrolase B (gghB) from Dictyostelium discoideum (Social amoeba).